Reading from the N-terminus, the 124-residue chain is Fluoride-specific ion channel FluC (124 aa).

A run of 4 helical transmembrane segments spans residues 5–25 (ILAV…TGTW), 38–58 (TLAV…LFLL), 69–89 (GLIV…LDTL), and 99–119 (LALG…WAGL). Na(+) is bound by residues glycine 76 and threonine 79.

The protein belongs to the fluoride channel Fluc/FEX (TC 1.A.43) family.

It is found in the cell inner membrane. It catalyses the reaction fluoride(in) = fluoride(out). With respect to regulation, na(+) is not transported, but it plays an essential structural role and its presence is essential for fluoride channel function. Its function is as follows. Fluoride-specific ion channel. Important for reducing fluoride concentration in the cell, thus reducing its toxicity. The sequence is that of Fluoride-specific ion channel FluC from Pseudomonas syringae pv. syringae (strain B728a).